Consider the following 422-residue polypeptide: Histidine--tRNA ligase (422 aa).

This sequence belongs to the class-II aminoacyl-tRNA synthetase family. In terms of assembly, homodimer.

The protein resides in the cytoplasm. It catalyses the reaction tRNA(His) + L-histidine + ATP = L-histidyl-tRNA(His) + AMP + diphosphate + H(+). This chain is Histidine--tRNA ligase, found in Nocardia farcinica (strain IFM 10152).